The sequence spans 199 residues: Chaperone protein TorD (199 aa).

Belongs to the TorD/DmsD family. TorD subfamily.

Its subcellular location is the cytoplasm. Functionally, involved in the biogenesis of TorA. Acts on TorA before the insertion of the molybdenum cofactor and, as a result, probably favors a conformation of the apoenzyme that is competent for acquiring the cofactor. The polypeptide is Chaperone protein TorD (Actinobacillus pleuropneumoniae serotype 3 (strain JL03)).